The chain runs to 175 residues: Large ribosomal subunit protein uL18 (175 aa).

This sequence belongs to the universal ribosomal protein uL18 family. As to quaternary structure, part of the 50S ribosomal subunit. Contacts the 5S and 23S rRNAs.

Its function is as follows. This is one of the proteins that bind and probably mediate the attachment of the 5S RNA into the large ribosomal subunit, where it forms part of the central protuberance. This is Large ribosomal subunit protein uL18 from Methanosphaerula palustris (strain ATCC BAA-1556 / DSM 19958 / E1-9c).